The chain runs to 298 residues: Elongation factor Ts (298 aa).

The segment at 80–83 (TDFV) is involved in Mg(2+) ion dislocation from EF-Tu.

It belongs to the EF-Ts family.

It is found in the cytoplasm. Its function is as follows. Associates with the EF-Tu.GDP complex and induces the exchange of GDP to GTP. It remains bound to the aminoacyl-tRNA.EF-Tu.GTP complex up to the GTP hydrolysis stage on the ribosome. The polypeptide is Elongation factor Ts (Acidovorax sp. (strain JS42)).